Here is a 214-residue protein sequence, read N- to C-terminus: Large ribosomal subunit protein uL4c (214 aa).

Residues 43 to 80 form a disordered region; that stretch reads KQSNEKRQGSANTKTRSEVRGGGRKPWRQKGTGRARAG. Over residues 64–75 the composition is skewed to basic residues; it reads GGRKPWRQKGTG.

Belongs to the universal ribosomal protein uL4 family. In terms of assembly, part of the 50S ribosomal subunit.

The protein localises to the plastid. It is found in the chloroplast. Probably binds the 23S rRNA. The protein is Large ribosomal subunit protein uL4c (rpl4) of Porphyra purpurea (Red seaweed).